A 183-amino-acid chain; its full sequence is Peptide deformylase (183 aa).

Fe cation contacts are provided by C111 and H154. E155 is an active-site residue. A Fe cation-binding site is contributed by H158.

The cofactor is Fe(2+).

It catalyses the reaction N-terminal N-formyl-L-methionyl-[peptide] + H2O = N-terminal L-methionyl-[peptide] + formate. Its function is as follows. Removes the formyl group from the N-terminal Met of newly synthesized proteins. Requires at least a dipeptide for an efficient rate of reaction. N-terminal L-methionine is a prerequisite for activity but the enzyme has broad specificity at other positions. The chain is Peptide deformylase from Staphylococcus aureus.